We begin with the raw amino-acid sequence, 192 residues long: dTTP/UTP pyrophosphatase (192 aa).

Catalysis depends on D75, which acts as the Proton acceptor.

Belongs to the Maf family. YhdE subfamily. Requires a divalent metal cation as cofactor.

The protein resides in the cytoplasm. It carries out the reaction dTTP + H2O = dTMP + diphosphate + H(+). The enzyme catalyses UTP + H2O = UMP + diphosphate + H(+). Nucleoside triphosphate pyrophosphatase that hydrolyzes dTTP and UTP. May have a dual role in cell division arrest and in preventing the incorporation of modified nucleotides into cellular nucleic acids. The protein is dTTP/UTP pyrophosphatase of Pelodictyon phaeoclathratiforme (strain DSM 5477 / BU-1).